The chain runs to 379 residues: MERPLRIGIIAGELSGDTLGEGFIKAVKQQYPDAEFVGIGGPKMIAQGCESLFDMEELAVMGLVEVLGRLPRLLKVKAQLVKYFTENPPDVFIGIDAPDFNLRVELDLKNAGIKTVHYVSPSVWAWRQKRIFKIEAATNLVLAFLPFEKAFYDKFNVPCEFIGHTLADAIPLQSDKASAREILGLEQDKQWLSVLPGSRGSELKMLSQPFIETCKKLHQKFPDIGFVVALVNQKRREQFEQAWKEHAPELDFKLVDDTARNVITASDAVMLASGTVALECMLLKRPMVVGYRVNAVTAFLAKRLLKTKYVSLPNILADTELVKEYLQDDCTPDNLFDEVSRLLESDNREMLDKFTEMHHWIRKDADQQAANAVLKLIEK.

It belongs to the LpxB family.

The catalysed reaction is a lipid X + a UDP-2-N,3-O-bis[(3R)-3-hydroxyacyl]-alpha-D-glucosamine = a lipid A disaccharide + UDP + H(+). It participates in bacterial outer membrane biogenesis; LPS lipid A biosynthesis. Its function is as follows. Condensation of UDP-2,3-diacylglucosamine and 2,3-diacylglucosamine-1-phosphate to form lipid A disaccharide, a precursor of lipid A, a phosphorylated glycolipid that anchors the lipopolysaccharide to the outer membrane of the cell. This chain is Lipid-A-disaccharide synthase, found in Vibrio campbellii (strain ATCC BAA-1116).